The following is a 127-amino-acid chain: Translation initiation factor 5A (127 aa).

A Hypusine modification is found at Lys-35.

The protein belongs to the eIF-5A family.

It localises to the cytoplasm. Functions by promoting the formation of the first peptide bond. The sequence is that of Translation initiation factor 5A from Methanospirillum hungatei JF-1 (strain ATCC 27890 / DSM 864 / NBRC 100397 / JF-1).